A 61-amino-acid chain; its full sequence is Disintegrin atroxatin (61 aa).

The 61-residue stretch at 1-61 (NPCCDAATCK…ADCPRKGIYG (61 aa)) folds into the Disintegrin domain. Cystine bridges form between Cys3–Cys26, Cys9–Cys23, Cys17–Cys23, Cys22–Cys47, and Cys35–Cys54. A Cell attachment site motif is present at residues 39–41 (RGD).

This sequence belongs to the venom metalloproteinase (M12B) family. P-II subfamily. P-IIa sub-subfamily. As to quaternary structure, monomer (disintegrin). Expressed by the venom gland.

It localises to the secreted. In terms of biological role, inhibits fibrinogen interaction with platelets. Acts by binding to alpha-IIb/beta-3 (ITGA2B/ITGB3) on the platelet surface and inhibits aggregation induced by ADP, thrombin, platelet-activating factor and collagen. The chain is Disintegrin atroxatin from Crotalus atrox (Western diamondback rattlesnake).